We begin with the raw amino-acid sequence, 108 residues long: MIVTTTDVIQGAVIDSYLGIVTAEIVYGSNFLRDFLAGIRDVIGGRTGSYERLFEQGQRKAIEELELRAQRLGANAVIGIEIDTGTINVDQSGVLLLITATGTAVRVR.

The protein belongs to the UPF0145 family.

The protein is UPF0145 protein alr2488 of Nostoc sp. (strain PCC 7120 / SAG 25.82 / UTEX 2576).